A 213-amino-acid chain; its full sequence is Cell division protein SepF (213 aa).

The disordered stretch occupies residues 27–103; sequence VDAPAPRRAP…GSLRGSAPTR (77 aa). Composition is skewed to basic and acidic residues over residues 35–51 and 72–90; these read APVE…RFAD and DEDR…DRPA.

The protein belongs to the SepF family. Homodimer. Interacts with FtsZ.

Its subcellular location is the cytoplasm. Cell division protein that is part of the divisome complex and is recruited early to the Z-ring. Probably stimulates Z-ring formation, perhaps through the cross-linking of FtsZ protofilaments. Its function overlaps with FtsA. The polypeptide is Cell division protein SepF (Mycobacteroides abscessus (strain ATCC 19977 / DSM 44196 / CCUG 20993 / CIP 104536 / JCM 13569 / NCTC 13031 / TMC 1543 / L948) (Mycobacterium abscessus)).